A 44-amino-acid chain; its full sequence is Photosystem I reaction center subunit IX (44 aa).

Residues 9 to 29 form a helical membrane-spanning segment; that stretch reads FMRSAPIVAAIWISLTAGIII.

This sequence belongs to the PsaJ family.

Its subcellular location is the cellular thylakoid membrane. Functionally, may help in the organization of the PsaE and PsaF subunits. This Prochlorococcus marinus (strain MIT 9515) protein is Photosystem I reaction center subunit IX.